The chain runs to 45 residues: Thymosin beta-15A (45 aa).

2 stretches are compositionally biased toward basic and acidic residues: residues 1 to 27 (MSDK…EEKN) and 35 to 45 (IQQEKECVQTS). The interval 1 to 45 (MSDKPDLSEVEKFDRSKLKKTNTEEKNTLPSKETIQQEKECVQTS) is disordered.

Belongs to the thymosin beta family. In terms of tissue distribution, neuroblastoma-specific.

Its subcellular location is the cytoplasm. It is found in the cytoskeleton. In terms of biological role, plays an important role in the organization of the cytoskeleton. Binds to and sequesters actin monomers (G actin) and therefore inhibits actin polymerization. This Homo sapiens (Human) protein is Thymosin beta-15A (TMSB15A).